The primary structure comprises 342 residues: Anthranilate phosphoribosyltransferase (342 aa).

Residues Gly81, Gly84–Asp85, Asn91–Ser94, Lys109–Ser117, and Ser121 each bind 5-phospho-alpha-D-ribose 1-diphosphate. Residue Gly81 coordinates anthranilate. Position 93 (Ser93) interacts with Mg(2+). Asn112 contacts anthranilate. Arg167 lines the anthranilate pocket. The Mg(2+) site is built by Asp226 and Glu227.

The protein belongs to the anthranilate phosphoribosyltransferase family. Homodimer. Mg(2+) is required as a cofactor.

It carries out the reaction N-(5-phospho-beta-D-ribosyl)anthranilate + diphosphate = 5-phospho-alpha-D-ribose 1-diphosphate + anthranilate. It participates in amino-acid biosynthesis; L-tryptophan biosynthesis; L-tryptophan from chorismate: step 2/5. Functionally, catalyzes the transfer of the phosphoribosyl group of 5-phosphorylribose-1-pyrophosphate (PRPP) to anthranilate to yield N-(5'-phosphoribosyl)-anthranilate (PRA). The sequence is that of Anthranilate phosphoribosyltransferase from Marinobacter nauticus (strain ATCC 700491 / DSM 11845 / VT8) (Marinobacter aquaeolei).